Consider the following 257-residue polypeptide: Uxu operon transcriptional regulator (257 aa).

The HTH gntR-type domain occupies 8–76 (QRPYQEVGAM…RGAGIYVLDN (69 aa)). A DNA-binding region (H-T-H motif) is located at residues 36 to 55 (EREIAEMLDVTRTVVREALI).

In terms of biological role, repressor for the uxuRBA operon. The chain is Uxu operon transcriptional regulator (uxuR) from Escherichia coli (strain K12).